The following is a 214-amino-acid chain: Urease accessory protein UreG (214 aa).

Residue 23–30 (GPVGSGKT) coordinates GTP.

Belongs to the SIMIBI class G3E GTPase family. UreG subfamily. As to quaternary structure, homodimer. UreD, UreF and UreG form a complex that acts as a GTP-hydrolysis-dependent molecular chaperone, activating the urease apoprotein by helping to assemble the nickel containing metallocenter of UreC. The UreE protein probably delivers the nickel.

The protein resides in the cytoplasm. Facilitates the functional incorporation of the urease nickel metallocenter. This process requires GTP hydrolysis, probably effectuated by UreG. This Bordetella pertussis (strain Tohama I / ATCC BAA-589 / NCTC 13251) protein is Urease accessory protein UreG.